Here is a 332-residue protein sequence, read N- to C-terminus: MPEGPLVRKFHHLVSPFVGQQVVKTGGSSKKLQPASLQSLWLQDTQVHGKKLFLRFDLDEEMGPPGSSPTPEPPQKEVQKEGAADPKQVGEPSGQKTLDGSSRSAELVPQGEDDSEYLERDAPAGDAGRWLRVSFGLFGSVWVNDFSRAKKANKRGDWRDPSPRLVLHFGGGGFLAFYNCQLSWSSSPVVTPTCDILSEKFHRGQALEALGQAQPVCYTLLDQRYFSGLGNIIKNEALYRAGIHPLSLGSVLSASRREVLVDHVVEFSTAWLQGKFQGRPQHTQVYQKEQCPAGHQVMKEAFGPEDGLQRLTWWCPQCQPQLSEEPEQCQFS.

Pro-2 serves as the catalytic Schiff-base intermediate with DNA. The Proton donor role is filled by Glu-3. Residue Lys-50 is the Proton donor; for beta-elimination activity of the active site. Lys-50 carries the post-translational modification N6-acetyllysine. Positions 59-121 (DEEMGPPGSS…EDDSEYLERD (63 aa)) are disordered. Ser-68 is modified (phosphoserine). The span at 74 to 84 (PQKEVQKEGAA) shows a compositional bias: basic and acidic residues. Residues 94 to 104 (GQKTLDGSSRS) are compositionally biased toward polar residues. Lys-154 is subject to N6-acetyllysine. Asn-231 provides a ligand contact to DNA. Residues 284–320 (QVYQKEQCPAGHQVMKEAFGPEDGLQRLTWWCPQCQP) form an FPG-type zinc finger. Arg-310 functions as the Proton donor; for delta-elimination activity in the catalytic mechanism.

The protein belongs to the FPG family. Binds EP300. As to expression, detected in testis, skeletal muscle, heart, brain, placenta, lung, pancreas, kidney and liver.

The protein resides in the nucleus. It catalyses the reaction 2'-deoxyribonucleotide-(2'-deoxyribose 5'-phosphate)-2'-deoxyribonucleotide-DNA = a 3'-end 2'-deoxyribonucleotide-(2,3-dehydro-2,3-deoxyribose 5'-phosphate)-DNA + a 5'-end 5'-phospho-2'-deoxyribonucleoside-DNA + H(+). Its activity is regulated as follows. Acetylation of Lys-50 leads to loss of DNA nicking activity. Acetylation of Lys-154 has no effect. Its function is as follows. Involved in base excision repair of DNA damaged by oxidation or by mutagenic agents. Has DNA glycosylase activity towards 5-hydroxyuracil and other oxidized derivatives of cytosine with a preference for mismatched double-stranded DNA (DNA bubbles). Has low or no DNA glycosylase activity towards thymine glycol, 2-hydroxyadenine, hypoxanthine and 8-oxoguanine. Has AP (apurinic/apyrimidinic) lyase activity and introduces nicks in the DNA strand. Cleaves the DNA backbone by beta-delta elimination to generate a single-strand break at the site of the removed base with both 3'- and 5'-phosphates. The sequence is that of Endonuclease 8-like 2 (NEIL2) from Homo sapiens (Human).